Here is a 249-residue protein sequence, read N- to C-terminus: Probable GDP-mannose transporter 2 (249 aa).

At 1-15 the chain is on the lumenal side; it reads MIYTSSKSLQYLAVP. A helical membrane pass occupies residues 16 to 36; that stretch reads IYTIFKNLTIILIAYGEVLFF. The Cytoplasmic segment spans residues 37–47; the sequence is GGKVTSMELTS. A helical membrane pass occupies residues 48-68; that stretch reads FIMMVLSSVVATWGDQQAIAI. Residues 69–84 lie on the Lumenal side of the membrane; the sequence is KASSLEDLDQELVEST. Residues 85–105 traverse the membrane as a helical segment; sequence IFVLNPGYLWMFTNCISSALF. Topologically, residues 106–122 are cytoplasmic; the sequence is VLIMRKRIRLTNFKDYD. The chain crosses the membrane as a helical span at residues 123 to 143; that stretch reads TMFYNNVLALPLLLVFSFIME. Topologically, residues 144 to 159 are lumenal; that stretch reads DWSTKNLSVNLSADSL. Asn-149 and Asn-153 each carry an N-linked (GlcNAc...) asparagine glycan. Residues 160–180 traverse the membrane as a helical segment; the sequence is AAMVISGLMSVGISYCSGWCV. Residues 181-186 are Cytoplasmic-facing; it reads RVTSST. A helical transmembrane segment spans residues 187-207; that stretch reads TYSMVGALNKLPIALAGLVFF. At 208–211 the chain is on the lumenal side; that stretch reads DAPK. A helical transmembrane segment spans residues 212-232; the sequence is NFLSFFSIFLGFLSGLLYAVA. Residues 233–249 are Cytoplasmic-facing; it reads KQKKIQQQKVLAATLEK.

Belongs to the TPT transporter family. SLC35D subfamily.

Its subcellular location is the golgi apparatus membrane. It is found in the cytoplasmic vesicle membrane. The protein resides in the endoplasmic reticulum membrane. Functionally, involved in the import of GDP-mannose from the cytoplasm into the Golgi lumen. The protein is Probable GDP-mannose transporter 2 (HVG1) of Saccharomyces cerevisiae (strain RM11-1a) (Baker's yeast).